The primary structure comprises 552 residues: Scavenger receptor class B member 1 (552 aa).

Residues 1-11 lie on the Cytoplasmic side of the membrane; sequence MGCSAKARWAA. A helical transmembrane segment spans residues 12–32; sequence GALGVAGLLCAVLGAVMIVMV. Topologically, residues 33 to 443 are extracellular; it reads PSLIKQQVLK…LVLMPKVMHY (411 aa). N-linked (GlcNAc...) asparagine glycans are attached at residues Asn-102, Asn-108, Asn-173, Asn-212, Asn-227, Asn-255, Asn-310, Asn-330, and Asn-383. Cys-251 and Cys-384 are disulfide-bonded. A phosphoserine mark is found at Tyr-393 and Val-458. A helical transmembrane segment spans residues 444–464; the sequence is AQYVLLALGCVLLLVPVICQI. Cys-462 carries S-palmitoyl cysteine lipidation. The Cytoplasmic portion of the chain corresponds to 465–552; the sequence is RSQVGAGQRA…GPSLGGGTGS (88 aa). The residue at position 493 (Thr-493) is a Phosphoserine.

The protein belongs to the CD36 family. The C-terminal region binds to PDZK1. In terms of assembly, (Microbial infection) Interacts with hepatitis C virus E1:E2 glycoproteins. N-glycosylated. Post-translationally, the six cysteines of the extracellular domain are all involved in intramolecular disulfide bonds. In terms of tissue distribution, widely expressed.

Its subcellular location is the cell membrane. It is found in the membrane. The protein localises to the caveola. Receptor for different ligands such as phospholipids, cholesterol ester, lipoproteins, phosphatidylserine and apoptotic cells. Receptor for HDL, mediating selective uptake of cholesteryl ether and HDL-dependent cholesterol efflux. Also facilitates the flux of free and esterified cholesterol between the cell surface and apoB-containing lipoproteins and modified lipoproteins, although less efficiently than HDL. May be involved in the phagocytosis of apoptotic cells, via its phosphatidylserine binding activity. Functionally, (Microbial infection) Acts as a receptor for hepatitis C virus in hepatocytes and appears to facilitate its cell entry. Binding between SCARB1 and the hepatitis C virus glycoprotein E2 is independent of the genotype of the viral isolate. Its function is as follows. (Microbial infection) Mediates uptake of M.fortuitum, E.coli and S.aureus. In terms of biological role, (Microbial infection) Facilitates the entry of human coronavirus SARS-CoV-2 by acting as an entry cofactor through HDL binding. This Homo sapiens (Human) protein is Scavenger receptor class B member 1 (SCARB1).